A 1079-amino-acid polypeptide reads, in one-letter code: Translation initiation factor IF-2 (1079 aa).

Composition is skewed to basic and acidic residues over residues Val52–Asn65, Arg75–Glu90, and Ala102–Gln134. The segment at Val52–Ala488 is disordered. A compositionally biased stretch (low complexity) spans Ala150–Thr184. Basic and acidic residues predominate over residues Val185–Ala194. Residues Ala276–Gln291 show a composition bias toward low complexity. Residues Gly306–Gly327 are compositionally biased toward basic and acidic residues. 2 stretches are compositionally biased toward low complexity: residues Glu348 to Pro370 and Pro380 to Pro398. The segment covering Pro419–Gly429 has biased composition (gly residues). A compositionally biased stretch (basic and acidic residues) spans Pro461–Arg471. Over residues Pro473 to Lys482 the composition is skewed to basic residues. The tr-type G domain maps to Thr578–Glu745. The interval Gly587–Thr594 is G1. Residue Gly587–Thr594 participates in GTP binding. The interval Gly612–His616 is G2. The interval Asp633 to Gly636 is G3. Residues Asp633–His637 and Asn687–Asp690 contribute to the GTP site. A G4 region spans residues Asn687 to Asp690. The G5 stretch occupies residues Ser723 to Lys725.

This sequence belongs to the TRAFAC class translation factor GTPase superfamily. Classic translation factor GTPase family. IF-2 subfamily.

The protein resides in the cytoplasm. One of the essential components for the initiation of protein synthesis. Protects formylmethionyl-tRNA from spontaneous hydrolysis and promotes its binding to the 30S ribosomal subunits. Also involved in the hydrolysis of GTP during the formation of the 70S ribosomal complex. The chain is Translation initiation factor IF-2 from Nitratidesulfovibrio vulgaris (strain DP4) (Desulfovibrio vulgaris).